We begin with the raw amino-acid sequence, 231 residues long: Staphylococcal superantigen-like 7 (231 aa).

The first 30 residues, 1-30 (MKLKTLAKATLALGLLTTGVITSEGQAVQA), serve as a signal peptide directing secretion.

It belongs to the staphylococcal/streptococcal toxin family. As to quaternary structure, interacts with host IgA and complement C5; these interactions inhibits complement activation.

The protein localises to the secreted. In terms of biological role, plays a role in the inhibition of host complement-mediated lysis and serum bactericidal activity by interacting with complement component C5. Affects all three pathways of complement activation and inhibits the cleavage of C5 by preventing its binding to C5 convertases. In turn, prevents C5a-mediated neutrophil migration. This chain is Staphylococcal superantigen-like 7, found in Staphylococcus aureus (strain NCTC 8325 / PS 47).